Consider the following 225-residue polypeptide: Small ribosomal subunit protein uS3 (225 aa).

The KH type-2 domain maps to 38–106 (IRKFIQSRFS…PVNLNIIEVK (69 aa)).

It belongs to the universal ribosomal protein uS3 family. Part of the 30S ribosomal subunit. Forms a tight complex with proteins S10 and S14.

Its function is as follows. Binds the lower part of the 30S subunit head. Binds mRNA in the 70S ribosome, positioning it for translation. In Leptospira borgpetersenii serovar Hardjo-bovis (strain JB197), this protein is Small ribosomal subunit protein uS3.